Consider the following 233-residue polypeptide: Adenosine 5'-phosphosulfate reductase (233 aa).

Cysteine 120, cysteine 121, cysteine 203, and cysteine 206 together coordinate [4Fe-4S] cluster. Cysteine 229 functions as the Nucleophile; cysteine thiosulfonate intermediate in the catalytic mechanism.

It belongs to the PAPS reductase family. CysH subfamily. Requires [4Fe-4S] cluster as cofactor.

The protein localises to the cytoplasm. It catalyses the reaction [thioredoxin]-disulfide + sulfite + AMP + 2 H(+) = adenosine 5'-phosphosulfate + [thioredoxin]-dithiol. The protein operates within sulfur metabolism; hydrogen sulfide biosynthesis; sulfite from sulfate. In terms of biological role, catalyzes the formation of sulfite from adenosine 5'-phosphosulfate (APS) using thioredoxin as an electron donor. This Lysinibacillus sphaericus (strain C3-41) protein is Adenosine 5'-phosphosulfate reductase.